Here is a 319-residue protein sequence, read N- to C-terminus: Annexin D4 (319 aa).

Annexin repeat units follow at residues 1-75 and 86-157; these read MALP…EFSR and HPWE…GLVS. 3 residues coordinate Ca(2+): G19, G21, and E72. T115 bears the Phosphothreonine mark. Phosphotyrosine occurs at positions 159 and 211. Annexin repeat units lie at residues 169–240 and 241–316; these read DSAK…ICLL and KPAL…TLLS. At S277 the chain carries Phosphoserine. Y287 is subject to Phosphotyrosine.

Belongs to the annexin (TC 1.A.31.1) family. Expressed mainly in roots and flowers. Lower in stems and leaves.

In terms of biological role, may be involved in osmotic stress and abscisic acid signaling in a calcium-dependent manner. In Arabidopsis thaliana (Mouse-ear cress), this protein is Annexin D4 (ANN4).